The sequence spans 208 residues: dITP/XTP pyrophosphatase (208 aa).

16–21 (TGNAGK) contributes to the substrate binding site. Mg(2+) is bound by residues Glu46 and Asp75. The active-site Proton acceptor is the Asp75. Substrate-binding positions include Ser76, 155 to 158 (FGYD), Lys178, and 183 to 184 (HR).

Belongs to the HAM1 NTPase family. Homodimer. Mg(2+) is required as a cofactor.

The enzyme catalyses XTP + H2O = XMP + diphosphate + H(+). The catalysed reaction is dITP + H2O = dIMP + diphosphate + H(+). It catalyses the reaction ITP + H2O = IMP + diphosphate + H(+). Its function is as follows. Pyrophosphatase that catalyzes the hydrolysis of nucleoside triphosphates to their monophosphate derivatives, with a high preference for the non-canonical purine nucleotides XTP (xanthosine triphosphate), dITP (deoxyinosine triphosphate) and ITP. Seems to function as a house-cleaning enzyme that removes non-canonical purine nucleotides from the nucleotide pool, thus preventing their incorporation into DNA/RNA and avoiding chromosomal lesions. The sequence is that of dITP/XTP pyrophosphatase from Deinococcus deserti (strain DSM 17065 / CIP 109153 / LMG 22923 / VCD115).